Reading from the N-terminus, the 66-residue chain is Large ribosomal subunit protein uL29 (66 aa).

Belongs to the universal ribosomal protein uL29 family.

The chain is Large ribosomal subunit protein uL29 from Rhizobium meliloti (strain 1021) (Ensifer meliloti).